A 57-amino-acid polypeptide reads, in one-letter code: MKLTCVLIVAVLILTACQVIAADSSCWFCSTGFNKCCESTGDCMTYPSEYNASCPEA.

The first 22 residues, 1 to 22, serve as a signal peptide directing secretion; the sequence is MKLTCVLIVAVLILTACQVIAA. 3 disulfide bridges follow: C26–C37, C29–C43, and C36–C54.

This sequence belongs to the conotoxin O1 superfamily. Expressed by the venom duct.

It is found in the secreted. Functionally, probable neurotoxin. In Californiconus californicus (California cone), this protein is Conotoxin Cal6.34.